Consider the following 86-residue polypeptide: Small ribosomal subunit protein uS17 (86 aa).

Belongs to the universal ribosomal protein uS17 family. In terms of assembly, part of the 30S ribosomal subunit.

In terms of biological role, one of the primary rRNA binding proteins, it binds specifically to the 5'-end of 16S ribosomal RNA. The polypeptide is Small ribosomal subunit protein uS17 (Shouchella clausii (strain KSM-K16) (Alkalihalobacillus clausii)).